Consider the following 609-residue polypeptide: ATP-dependent lipid A-core flippase (609 aa).

6 helical membrane passes run 47 to 67, 88 to 108, 167 to 187, 190 to 210, 279 to 299, and 305 to 325; these read LLAA…IYLI, ILML…VGSF, AIIT…VMFV, WQLS…ISII, VIQI…AIFG, and GSSW…AAIL. The ABC transmembrane type-1 domain occupies 47 to 340; the sequence is LLAAIGSIFF…LTKVNVVIQK (294 aa). Residues 372 to 606 form the ABC transporter domain; it reads VTIKDLSFAF…GGLYTRLYQS (235 aa). 404–411 lines the ATP pocket; sequence GKSGSGKT.

The protein belongs to the ABC transporter superfamily. Lipid exporter (TC 3.A.1.106) family. As to quaternary structure, homodimer.

Its subcellular location is the cell inner membrane. The enzyme catalyses ATP + H2O + lipid A-core oligosaccharideSide 1 = ADP + phosphate + lipid A-core oligosaccharideSide 2.. Its function is as follows. Involved in lipopolysaccharide (LPS) biosynthesis. Translocates lipid A-core from the inner to the outer leaflet of the inner membrane. Transmembrane domains (TMD) form a pore in the inner membrane and the ATP-binding domain (NBD) is responsible for energy generation. The sequence is that of ATP-dependent lipid A-core flippase from Francisella tularensis subsp. holarctica (strain LVS).